A 463-amino-acid polypeptide reads, in one-letter code: Glutamate--tRNA ligase (463 aa).

A 'HIGH' region motif is present at residues 10-20; the sequence is PSPTGYLHIGG. The 'KMSKS' region motif lies at 252 to 256; the sequence is KLSKR. An ATP-binding site is contributed by Lys255.

The protein belongs to the class-I aminoacyl-tRNA synthetase family. Glutamate--tRNA ligase type 1 subfamily. As to quaternary structure, monomer.

Its subcellular location is the cytoplasm. It carries out the reaction tRNA(Glu) + L-glutamate + ATP = L-glutamyl-tRNA(Glu) + AMP + diphosphate. In terms of biological role, catalyzes the attachment of glutamate to tRNA(Glu) in a two-step reaction: glutamate is first activated by ATP to form Glu-AMP and then transferred to the acceptor end of tRNA(Glu). The polypeptide is Glutamate--tRNA ligase (Mycoplasmopsis agalactiae (strain NCTC 10123 / CIP 59.7 / PG2) (Mycoplasma agalactiae)).